The following is a 263-amino-acid chain: 4-hydroxy-2-oxo-heptane-1,7-dioate aldolase (263 aa).

H45 functions as the Proton acceptor in the catalytic mechanism. Substrate is bound at residue Q147. E149 serves as a coordination point for a divalent metal cation. Substrate-binding residues include A174 and D175. D175 is a binding site for a divalent metal cation.

This sequence belongs to the HpcH/HpaI aldolase family. As to quaternary structure, homohexamer; trimer of dimers. A divalent metal cation serves as cofactor.

It carries out the reaction 4-hydroxy-2-oxoheptanedioate = succinate semialdehyde + pyruvate. It participates in aromatic compound metabolism; 4-hydroxyphenylacetate degradation; pyruvate and succinate semialdehyde from 4-hydroxyphenylacetate: step 7/7. In terms of biological role, catalyzes the reversible retro-aldol cleavage of 4-hydroxy-2-ketoheptane-1,7-dioate (HKHD) to pyruvate and succinic semialdehyde. This Salmonella arizonae (strain ATCC BAA-731 / CDC346-86 / RSK2980) protein is 4-hydroxy-2-oxo-heptane-1,7-dioate aldolase.